A 116-amino-acid chain; its full sequence is NADH-ubiquinone oxidoreductase chain 3 (116 aa).

A run of 3 helical transmembrane segments spans residues 3-23, 56-76, and 85-105; these read LITTIIAITITLSAVLATVSF, FFLIAILFLLFDLEIALLLPL, and PALTLAWSAAVLALLTLGLIY.

It belongs to the complex I subunit 3 family.

The protein localises to the mitochondrion membrane. The enzyme catalyses a ubiquinone + NADH + 5 H(+)(in) = a ubiquinol + NAD(+) + 4 H(+)(out). Functionally, core subunit of the mitochondrial membrane respiratory chain NADH dehydrogenase (Complex I) that is believed to belong to the minimal assembly required for catalysis. Complex I functions in the transfer of electrons from NADH to the respiratory chain. The immediate electron acceptor for the enzyme is believed to be ubiquinone. The polypeptide is NADH-ubiquinone oxidoreductase chain 3 (MT-ND3) (Salmo trutta (Brown trout)).